The sequence spans 250 residues: NAD(P)H-quinone oxidoreductase subunit S, chloroplastic (250 aa).

The transit peptide at 1–48 (MATSSITIPTIRTPIHRSKFLGQTHQFSTVNRSVFPPPKQQSKLYQVK) directs the protein to the chloroplast. Residue lysine 52 forms a Glycyl lysine isopeptide (Lys-Gly) (interchain with G-Cter in ubiquitin) linkage. 2 stretches are compositionally biased toward basic and acidic residues: residues 76–94 (QRNI…NETE) and 106–115 (VPEDGFEKEM). Disordered regions lie at residues 76–163 (QRNI…KPKA) and 222–250 (REKG…EAAP). The segment covering 136-146 (NPPPPPPPPPA) has biased composition (pro residues).

In terms of assembly, part of the chloroplast NDH complex, composed of a mixture of chloroplast and nucleus encoded subunits. Component of the electron donor-binding subcomplex, at least composed of NDHS, NDHT and NDHU. Interacts with the NDH subcomplex A via the protein NDHT and NDHU. Post-translationally, arg-193 is the critical site for the high affinity binding of NDH to ferredoxin.

The protein resides in the plastid. Its subcellular location is the chloroplast thylakoid membrane. The catalysed reaction is a plastoquinone + NADH + (n+1) H(+)(in) = a plastoquinol + NAD(+) + n H(+)(out). It carries out the reaction a plastoquinone + NADPH + (n+1) H(+)(in) = a plastoquinol + NADP(+) + n H(+)(out). In terms of biological role, NDH shuttles electrons from NAD(P)H:plastoquinone, via FMN and iron-sulfur (Fe-S) centers, to quinones in the photosynthetic chain and possibly in a chloroplast respiratory chain. The immediate electron acceptor for the enzyme in this species is believed to be plastoquinone. Couples the redox reaction to proton translocation, and thus conserves the redox energy in a proton gradient. Required for the efficient operation of ferredoxin-dependent plastoquinone reduction. Forms the electron donor-binding subcomplex in association with the NDHT and NDHU subunits. The sequence is that of NAD(P)H-quinone oxidoreductase subunit S, chloroplastic from Arabidopsis thaliana (Mouse-ear cress).